A 979-amino-acid polypeptide reads, in one-letter code: Putative cellulose synthase-like protein D6 (979 aa).

A disordered region spans residues 1 to 24; that stretch reads MMDGESPLRHPRISHVSNSGSDFG. Positions 14-24 are enriched in low complexity; it reads SHVSNSGSDFG. 2 helical membrane-spanning segments follow: residues 116 to 136 and 147 to 167; these read IIIA…ALFL and ALWL…SWLL. Catalysis depends on residues Asp247 and Asp683. 6 helical membrane-spanning segments follow: residues 765-785, 788-808, 837-857, 882-902, 913-933, and 946-966; these read IFIL…HFVV, LTGS…GLAV, LVAV…SFTL, ALMI…LFAV, WSNL…MYPF, and TVVY…YITI.

The protein belongs to the glycosyltransferase 2 family. Plant cellulose synthase-like D subfamily.

The protein localises to the golgi apparatus membrane. Its function is as follows. Thought to be a Golgi-localized beta-glycan synthase that polymerize the backbones of noncellulosic polysaccharides (hemicelluloses) of plant cell wall. The protein is Putative cellulose synthase-like protein D6 (CSLD6) of Arabidopsis thaliana (Mouse-ear cress).